Here is an 881-residue protein sequence, read N- to C-terminus: Envelope glycoprotein gp160 (881 aa).

The N-terminal stretch at 1–19 (MGCLGNQLLIAILLLSVYG) is a signal peptide. Topologically, residues 20–696 (IYCTQYVTVF…ASWIKYIQYG (677 aa)) are extracellular. N-linked (GlcNAc...) asparagine; by host glycosylation is present at N37. An intrachain disulfide couples C44 to C57. N-linked (GlcNAc...) asparagine; by host glycosylation is found at N70, N114, N148, N158, N186, N200, N204, N214, N246, N249, N280, N286, N297, N308, N318, N373, and N379. 5 disulfide bridges follow: C101/C222, C108/C213, C113/C170, C235/C265, and C245/C257. The segment at 113 to 169 (CNKSETDRWGLTKSSTTITTAAPTSAPVSEKIDMVNETSSCIAQNNCTGLEQEQMIS) is V1. The segment at 170–213 (CKFTMTGLKRDKTKEYNETWYSTDLVCEQGNSTDNESRCYMNHC) is V2. The tract at residues 313 to 345 (CRRPGNKTVLPVTIMSGLVFHSQPLTDRPKQAW) is V3. The cysteines at positions 313 and 346 are disulfide-linked. Intrachain disulfides connect C397/C461 and C404/C434. The V4 stretch occupies residues 404-434 (CKMNWFLNWVEDRDVTTQRPKERHRRNYVPC). N-linked (GlcNAc...) asparagine; by host glycosylation is found at N462 and N478. The tract at residues 477-484 (GNQTSITM) is V5. Residues 528–548 (GVFVLGFLGFLATAGSAMGAA) are fusion peptide. The immunosuppression stretch occupies residues 591–607 (LQTRVTAIEKYLEDQAQ). Residues N627, N636, and N652 are each glycosylated (N-linked (GlcNAc...) asparagine; by host). A coiled-coil region spans residues 636 to 668 (NDTWQEWERKVDFLEENITALLEEAQIQQEKNM). Residues 673-694 (KLNSWDVFGNWFDLASWIKYIQ) are MPER; binding to GalCer. A helical transmembrane segment spans residues 697–717 (IYVVVGVILLRIVIYIVQMLA). The Cytoplasmic portion of the chain corresponds to 718-881 (KLRQGYRPVF…IRQGLELTLL (164 aa)). A YXXV motif; contains endocytosis signal motif is present at residues 723–726 (YRPV). The segment at 737–761 (THTQQDPALPTREGKEGDGGEGGGN) is disordered. Residue C789 is the site of S-palmitoyl cysteine; by host attachment. Residues 880–881 (LL) carry the Di-leucine internalization motif motif.

As to quaternary structure, the mature envelope protein (Env) consists of a homotrimer of non-covalently associated gp120-gp41 heterodimers. The resulting complex protrudes from the virus surface as a spike. Interacts with host CD4 and CCR5. Gp120 also interacts with the C-type lectins CD209/DC-SIGN and CLEC4M/DC-SIGNR (collectively referred to as DC-SIGN(R)). The mature envelope protein (Env) consists of a homotrimer of non-covalently associated gp120-gp41 heterodimers. The resulting complex protrudes from the virus surface as a spike. Specific enzymatic cleavages in vivo yield mature proteins. Envelope glycoproteins are synthesized as an inactive precursor that is heavily N-glycosylated and processed likely by host cell furin in the Golgi to yield the mature SU and TM proteins. The cleavage site between SU and TM requires the minimal sequence [KR]-X-[KR]-R. Post-translationally, palmitoylation of the transmembrane protein and of Env polyprotein (prior to its proteolytic cleavage) is essential for their association with host cell membrane lipid rafts. Palmitoylation is therefore required for envelope trafficking to classical lipid rafts, but not for viral replication.

The protein localises to the virion membrane. It is found in the host cell membrane. It localises to the host endosome membrane. Its function is as follows. The surface protein gp120 (SU) attaches the virus to the host lymphoid cell by binding to the primary receptor CD4. This interaction induces a structural rearrangement creating a high affinity binding site for a chemokine coreceptor like CCR5. This peculiar 2 stage receptor-interaction strategy allows gp120 to maintain the highly conserved coreceptor-binding site in a cryptic conformation, protected from neutralizing antibodies. These changes are transmitted to the transmembrane protein gp41 and are thought to activate its fusogenic potential by unmasking its fusion peptide. In terms of biological role, surface protein gp120 (SU) may target the virus to gut-associated lymphoid tissue (GALT) by binding host ITGA4/ITGB7 (alpha-4/beta-7 integrins), a complex that mediates T-cell migration to the GALT. Interaction between gp120 and ITGA4/ITGB7 would allow the virus to enter GALT early in the infection, infecting and killing most of GALT's resting CD4+ T-cells. This T-cell depletion is believed to be the major insult to the host immune system leading to AIDS. Functionally, the surface protein gp120 is a ligand for CD209/DC-SIGN and CLEC4M/DC-SIGNR, which are respectively found on dendritic cells (DCs), and on endothelial cells of liver sinusoids and lymph node sinuses. These interactions allow capture of viral particles at mucosal surfaces by these cells and subsequent transmission to permissive cells. DCs are professional antigen presenting cells, critical for host immunity by inducing specific immune responses against a broad variety of pathogens. They act as sentinels in various tissues where they take up antigen, process it, and present it to T-cells following migration to lymphoid organs. SIV subverts the migration properties of dendritic cells to gain access to CD4+ T-cells in lymph nodes. Virus transmission to permissive T-cells occurs either in trans (without DCs infection, through viral capture and transmission), or in cis (following DCs productive infection, through the usual CD4-gp120 interaction), thereby inducing a robust infection. In trans infection, bound virions remain infectious over days and it is proposed that they are not degraded, but protected in non-lysosomal acidic organelles within the DCs close to the cell membrane thus contributing to the viral infectious potential during DCs' migration from the periphery to the lymphoid tissues. On arrival at lymphoid tissues, intact virions recycle back to DCs' cell surface allowing virus transmission to CD4+ T-cells. Virion capture also seems to lead to MHC-II-restricted viral antigen presentation, and probably to the activation of SIV-specific CD4+ cells. The transmembrane protein gp41 (TM) acts as a class I viral fusion protein. Under the current model, the protein has at least 3 conformational states: pre-fusion native state, pre-hairpin intermediate state, and post-fusion hairpin state. During fusion of viral and target intracellular membranes, the coiled coil regions (heptad repeats) assume a trimer-of-hairpins structure, positioning the fusion peptide in close proximity to the C-terminal region of the ectodomain. The formation of this structure appears to drive apposition and subsequent fusion of viral and target cell membranes. Complete fusion occurs in host cell endosomes. The virus undergoes clathrin-dependent internalization long before endosomal fusion, thus minimizing the surface exposure of conserved viral epitopes during fusion and reducing the efficacy of inhibitors targeting these epitopes. Membranes fusion leads to delivery of the nucleocapsid into the cytoplasm. Its function is as follows. The envelope glycoprotein gp160 precursor down-modulates cell surface CD4 antigen by interacting with it in the endoplasmic reticulum and blocking its transport to the cell surface. In terms of biological role, the gp120-gp41 heterodimer allows rapid transcytosis of the virus through CD4 negative cells such as simple epithelial monolayers of the intestinal, rectal and endocervical epithelial barriers. Both gp120 and gp41 specifically recognize glycosphingolipids galactosyl-ceramide (GalCer) or 3' sulfo-galactosyl-ceramide (GalS) present in the lipid rafts structures of epithelial cells. Binding to these alternative receptors allows the rapid transcytosis of the virus through the epithelial cells. This transcytotic vesicle-mediated transport of virions from the apical side to the basolateral side of the epithelial cells does not involve infection of the cells themselves. This Simian immunodeficiency virus (isolate K6W) (SIV-mac) protein is Envelope glycoprotein gp160 (env).